Reading from the N-terminus, the 119-residue chain is Large ribosomal subunit protein bL20c (119 aa).

It belongs to the bacterial ribosomal protein bL20 family.

It localises to the plastid. Its subcellular location is the chloroplast. In terms of biological role, binds directly to 23S ribosomal RNA and is necessary for the in vitro assembly process of the 50S ribosomal subunit. It is not involved in the protein synthesizing functions of that subunit. The polypeptide is Large ribosomal subunit protein bL20c (Oedogonium cardiacum (Filamentous green alga)).